Here is a 291-residue protein sequence, read N- to C-terminus: MGTRIDGKKVAARTKADLAKRVELLKARGIQPGLGTILVGSDPGSVKYVAGKHADCAEIGVNSIKRELPENATFDQVADAVRQLNADPACTGYIVQLPLPRGIDENAIIDLIDPKKDADGMHPYNLGELVLHARGDITTPLPCTPRGVIELLRAYDIDLDGKEVCVLGRGITIGRTIGLLLTRKAVNATVTLCHTGTKDVRDHMRRADVIVAAMGVAGFVKPEDIKEGSILVDVGVSRVFDEESGRYKVKGDVDKACYEKAFAYTPNPGGVGPMTRAMLLQNVVEMAERQL.

NADP(+) is bound by residues 168-170, Thr195, and Val236; that span reads GRG.

This sequence belongs to the tetrahydrofolate dehydrogenase/cyclohydrolase family. Homodimer.

The catalysed reaction is (6R)-5,10-methylene-5,6,7,8-tetrahydrofolate + NADP(+) = (6R)-5,10-methenyltetrahydrofolate + NADPH. It catalyses the reaction (6R)-5,10-methenyltetrahydrofolate + H2O = (6R)-10-formyltetrahydrofolate + H(+). It participates in one-carbon metabolism; tetrahydrofolate interconversion. Functionally, catalyzes the oxidation of 5,10-methylenetetrahydrofolate to 5,10-methenyltetrahydrofolate and then the hydrolysis of 5,10-methenyltetrahydrofolate to 10-formyltetrahydrofolate. In Bifidobacterium adolescentis (strain ATCC 15703 / DSM 20083 / NCTC 11814 / E194a), this protein is Bifunctional protein FolD.